Here is a 406-residue protein sequence, read N- to C-terminus: Eukaryotic initiation factor 4A-I (406 aa).

The interval Met1–Gly21 is disordered. Ser2 bears the N-acetylserine mark. Ser4 bears the Phosphoserine mark. A Q motif motif is present at residues Asp32–Gln60. One can recognise a Helicase ATP-binding domain in the interval Ile63–Ile234. Residue Ala76 to Thr83 participates in ATP binding. Lys118 bears the N6-acetyllysine mark. Lys146 is covalently cross-linked (Glycyl lysine isopeptide (Lys-Gly) (interchain with G-Cter in SUMO2)). The residue at position 158 (Thr158) is a Phosphothreonine. Position 174 is an N6-acetyllysine (Lys174). Residues Asp182–Asp185 carry the DEAD box motif. Position 193 is an N6-acetyllysine (Lys193). A Glycyl lysine isopeptide (Lys-Gly) (interchain with G-Cter in SUMO2) cross-link involves residue Lys225. N6-acetyllysine; alternate is present on Lys238. A Glycyl lysine isopeptide (Lys-Gly) (interchain with G-Cter in SUMO2); alternate cross-link involves residue Lys238. Positions Gly245–Ile406 constitute a Helicase C-terminal domain. Glycyl lysine isopeptide (Lys-Gly) (interchain with G-Cter in SUMO2) cross-links involve residues Lys309, Lys369, and Lys381.

The protein belongs to the DEAD box helicase family. eIF4A subfamily. In terms of assembly, eIF4F is a multi-subunit complex, the composition of which varies with external and internal environmental conditions. It is composed of at least EIF4A, EIF4E and EIF4G1/EIF4G3. Interacts with PAIP1, EIF4E and UPF2. Found in a complex with XPO7, EIF4A1, ARHGAP1, VPS26A, VPS29, VPS35 and SFN. May interact with NOM1. Interacts with PDCD4; this interferes with the interaction between EIF4A and EIF4G. Interacts with RBM4. Interacts with DDX3X in an RNA-independent manner. Interacts with PKP1 (via N-terminus); the interaction promotes EIF4A1 recruitment to the cap-dependent translation complex and EIF4A1 ATPase activity.

It localises to the cytoplasm. Its subcellular location is the perinuclear region. The protein resides in the cell membrane. The protein localises to the stress granule. It carries out the reaction ATP + H2O = ADP + phosphate + H(+). In terms of biological role, ATP-dependent RNA helicase which is a subunit of the eIF4F complex involved in cap recognition and is required for mRNA binding to ribosome. In the current model of translation initiation, eIF4A unwinds RNA secondary structures in the 5'-UTR of mRNAs which is necessary to allow efficient binding of the small ribosomal subunit, and subsequent scanning for the initiator codon. As a result, promotes cell proliferation and growth. The polypeptide is Eukaryotic initiation factor 4A-I (EIF4A1) (Bos taurus (Bovine)).